We begin with the raw amino-acid sequence, 94 residues long: uncharacterized protein (94 aa).

The N-terminal stretch at 1–19 (MKFSGLILGALALVSGAIA) is a signal peptide.

This sequence belongs to the protease inhibitor I9 family.

This is an uncharacterized protein from Neurospora crassa (strain ATCC 24698 / 74-OR23-1A / CBS 708.71 / DSM 1257 / FGSC 987).